The chain runs to 282 residues: NADPH-dependent 7-cyano-7-deazaguanine reductase (282 aa).

88 to 90 (IES) contributes to the substrate binding site. Residue 90-91 (SK) participates in NADPH binding. Cys-190 functions as the Thioimide intermediate in the catalytic mechanism. Asp-197 functions as the Proton donor in the catalytic mechanism. 229–230 (HE) serves as a coordination point for substrate. Residue 258–259 (RG) coordinates NADPH.

This sequence belongs to the GTP cyclohydrolase I family. QueF type 2 subfamily. Homodimer.

It localises to the cytoplasm. The enzyme catalyses 7-aminomethyl-7-carbaguanine + 2 NADP(+) = 7-cyano-7-deazaguanine + 2 NADPH + 3 H(+). It functions in the pathway tRNA modification; tRNA-queuosine biosynthesis. In terms of biological role, catalyzes the NADPH-dependent reduction of 7-cyano-7-deazaguanine (preQ0) to 7-aminomethyl-7-deazaguanine (preQ1). The chain is NADPH-dependent 7-cyano-7-deazaguanine reductase from Salmonella arizonae (strain ATCC BAA-731 / CDC346-86 / RSK2980).